The sequence spans 171 residues: 3-hydroxydecanoyl-[acyl-carrier-protein] dehydratase (171 aa).

His-70 is a catalytic residue.

The protein belongs to the thioester dehydratase family. FabA subfamily. Homodimer.

The protein resides in the cytoplasm. The catalysed reaction is a (3R)-hydroxyacyl-[ACP] = a (2E)-enoyl-[ACP] + H2O. The enzyme catalyses (3R)-hydroxydecanoyl-[ACP] = (2E)-decenoyl-[ACP] + H2O. It carries out the reaction (2E)-decenoyl-[ACP] = (3Z)-decenoyl-[ACP]. The protein operates within lipid metabolism; fatty acid biosynthesis. Necessary for the introduction of cis unsaturation into fatty acids. Catalyzes the dehydration of (3R)-3-hydroxydecanoyl-ACP to E-(2)-decenoyl-ACP and then its isomerization to Z-(3)-decenoyl-ACP. Can catalyze the dehydratase reaction for beta-hydroxyacyl-ACPs with saturated chain lengths up to 16:0, being most active on intermediate chain length. This Colwellia psychrerythraea (strain 34H / ATCC BAA-681) (Vibrio psychroerythus) protein is 3-hydroxydecanoyl-[acyl-carrier-protein] dehydratase.